We begin with the raw amino-acid sequence, 485 residues long: E3 ubiquitin-protein ligase rnf8 (485 aa).

The FHA domain occupies 43–97; sequence VSVGRGLNVTHQILSSSCPLMISRIHCVFKLNEGRQWTVTDNKSLNGVWVNGKRI. The tract at residues 150-232 is disordered; it reads AASLSQKLKN…SSTCSDSSQH (83 aa). Residues 199–219 are compositionally biased toward basic and acidic residues; that stretch reads GERRETLKLSSRPLEEDRDKA. A compositionally biased stretch (low complexity) spans 221–230; that stretch reads SSSSTCSDSS. The segment at 392-430 adopts an RING-type zinc-finger fold; it reads CSICSELFIEAVTLNCAHSFCQHCISEWRNRKDKCPMCW.

This sequence belongs to the RNF8 family. As to quaternary structure, homodimer. Forms a E2-E3 ubiquitin ligase complex composed of the rnf8 homodimer and a E2 heterodimer of ube2n and ube2v2.

It localises to the nucleus. The enzyme catalyses S-ubiquitinyl-[E2 ubiquitin-conjugating enzyme]-L-cysteine + [acceptor protein]-L-lysine = [E2 ubiquitin-conjugating enzyme]-L-cysteine + N(6)-ubiquitinyl-[acceptor protein]-L-lysine.. It participates in protein modification; protein ubiquitination. In terms of biological role, E3 ubiquitin-protein ligase that plays a key role in DNA damage signaling via 2 distinct roles: by mediating the 'Lys-63'-linked ubiquitination of histones H2A and H2AX and promoting the recruitment of DNA repair proteins at double-strand breaks (DSBs) sites, and by catalyzing 'Lys-48'-linked ubiquitination to remove target proteins from DNA damage sites. Following DNA DSBs, it is recruited to the sites of damage by ATM-phosphorylated mdc1 and catalyzes the 'Lys-63'-linked ubiquitination of histones H2A and H2AX. H2A ubiquitination also mediates the ATM-dependent transcriptional silencing at regions flanking DSBs in cis, a mechanism to avoid collision between transcription and repair intermediates. Also catalyzes the formation of 'Lys-48'-linked polyubiquitin chains, leading to degradation of substrate proteins. In addition to its function in damage signaling, also plays a role in higher-order chromatin structure by mediating extensive chromatin decondensation. This Danio rerio (Zebrafish) protein is E3 ubiquitin-protein ligase rnf8.